The primary structure comprises 238 residues: Ribosomal RNA small subunit methyltransferase G (238 aa).

Residues glycine 80, 131-132, and arginine 148 each bind S-adenosyl-L-methionine; that span reads AE.

Belongs to the methyltransferase superfamily. RNA methyltransferase RsmG family.

It localises to the cytoplasm. Specifically methylates the N7 position of a guanine in 16S rRNA. In Thermotoga maritima (strain ATCC 43589 / DSM 3109 / JCM 10099 / NBRC 100826 / MSB8), this protein is Ribosomal RNA small subunit methyltransferase G.